Consider the following 716-residue polypeptide: MALTAALKAQIAAWYKALQEQIPDFIPRAPQRQMIADVAKTLAGEEGRHLAIEAPTGVGKTLSYLIPGIAIAREEQKTLVVSTANVALQDQIYSKDLPLLKKIIPDLKFTAAFGRGRYVCPRNLTALASTEPTQQDLLAFLDDELTPNNQEEQKRCAKLKGDLDTYKWDGLRDHTDIAIDDDLWRRLSTDKASCLNRNCYYYRECPFFVARREIQEAEVVVANHALVMAAMESEAVLPDPKNLLLVLDEGHHLPDVARDALEMSAEITAPWYRLQLDLFTKLVATCMEQFRPKTIPPLAIPERLNAHCEELYELIASLNNILNLYMPAGQEAEHRFAMGELPDEVLEICQRLAKLTEMLRGLAELFLNDLSEKTGSHDIVRLHRLILQMNRALGMFEAQSKLWRLASLAQSSGAPVTKWATREEREGQLHLWFHCVGIRVSDQLERLLWRSIPHIIVTSATLRSLNSFSRLQEMSGLKEKAGDRFVALDSPFNHCEQGKIVIPRMRVEPSIDNEEQHIAEMAAFFRKQVESKKHLGMLVLFASGRAMQRFLDYVTDLRLMLLVQGDQPRYRLVELHRKRVANGERSVLVGLQSFAEGLDLKGDLLSQVHIHKIAFPPIDSPVVITEGEWLKSLNRYPFEVQSLPSASFNLIQQVGRLIRSHGCWGEVVIYDKRLLTKNYGKRLLDALPVFPIEQPEVPEGIVKKKEKTKSPRRRRR.

An HD1 domain N-terminus region spans residues 1–114 (MALTAALKAQ…PDLKFTAAFG (114 aa)). One can recognise a Helicase ATP-binding domain in the interval 17–294 (ALQEQIPDFI…TCMEQFRPKT (278 aa)). ATP contacts are provided by isoleucine 26, glutamine 31, lysine 60, and threonine 61. Residues 115–216 (RGRYVCPRNL…FFVARREIQE (102 aa)) are [4Fe-4S] domain. 4 residues coordinate [4Fe-4S] cluster: cysteine 120, cysteine 194, cysteine 199, and cysteine 205. Residues 217–261 (AEVVVANHALVMAAMESEAVLPDPKNLLLVLDEGHHLPDVARDAL) form an HD1 domain middle region. Residues 248-251 (DEGH) carry the DEAH box motif. The tract at residues 262–438 (EMSAEITAPW…LHLWFHCVGI (177 aa)) is arch domain. Residues 439–491 (RVSDQLERLLWRSIPHIIVTSATLRSLNSFSRLQEMSGLKEKAGDRFVALDSP) form an HD1 domain middle region. The interval 492-716 (FNHCEQGKIV…KTKSPRRRRR (225 aa)) is HD2 domain. ATP is bound by residues aspartate 599, arginine 656, and arginine 659.

This sequence belongs to the helicase family. DinG subfamily. Type 1 sub-subfamily. Monomer in solution. [4Fe-4S] cluster is required as a cofactor. It depends on Mg(2+) as a cofactor.

The catalysed reaction is Couples ATP hydrolysis with the unwinding of duplex DNA at the replication fork by translocating in the 5'-3' direction. This creates two antiparallel DNA single strands (ssDNA). The leading ssDNA polymer is the template for DNA polymerase III holoenzyme which synthesizes a continuous strand.. It carries out the reaction ATP + H2O = ADP + phosphate + H(+). With respect to regulation, ATPase activity is 15-fold stimulated by single-stranded DNA (ssDNA). Reduction of the [4Fe-4S] cluster reversibly switches off helicase activity. Remains fully active after exposure to 100-fold excess of hydrogen peroxide, but the [4Fe-4S] cluster can be efficiently modified by nitric oxide (NO), forming the DinG-bound dinitrosyl iron complex with the concomitant inactivation of helicase activity. Helicase activity on G-quadruplex DNA is inhibited by porphyrin derivatives meso-tetra (N-methyl-4-pyridyl) porphine tetra tosylate (T4) and N-methyl mesoporphyrin IX (NMM). Helicase activity on forked duplexes is not inhibited by T4 or NMM. G-quadruplex ligands such as Pyridostatin, PhenDC3, BRACO-19 and Netropsin can alter recognition and unwinding of G-quadruplex DNAs; the effect is both ligand- and G-quadruplex DNA-specific. DNA-dependent ATPase and 5'-3' DNA helicase. Can also unwind DNA:RNA hybrid duplexes. Is active on D-loops, R-loops, and on forked structures. Unwinds G-quadruplex DNA in a 5'-3' direction; unwinding efficiency differs on different substrates. Does not appear to unwind replication forks or Holliday junctions. Translocates on single-stranded (ss)DNA with a 5'-3' polarity. In vitro at high concentrations also unwinds in a 3'-5' direction. May be involved in recombinational DNA repair and the resumption of replication after DNA damage. The [4Fe-4S] cluster is redox active at cellular potentials and is involved in DNA-mediated charge-transport signaling between DNA repair proteins from distinct pathways. DinG cooperates at long-range with endonuclease III, a base excision repair enzyme, using DNA charge transport to redistribute to regions of DNA damage. Binds 10-11 nucleotides of ssDNA in a positively-charged groove across the helicase domains. In Escherichia coli (strain K12), this protein is ATP-dependent DNA helicase DinG.